The sequence spans 245 residues: Acetoacetate decarboxylase (245 aa).

Catalysis depends on lysine 116, which acts as the Schiff-base intermediate with acetoacetate.

It belongs to the ADC family.

It carries out the reaction acetoacetate + H(+) = acetone + CO2. Its function is as follows. Catalyzes the conversion of acetoacetate to acetone and carbon dioxide. This Acidiphilium cryptum (strain JF-5) protein is Acetoacetate decarboxylase.